Consider the following 1343-residue polypeptide: DNA-directed RNA polymerase subunit beta (1343 aa).

This sequence belongs to the RNA polymerase beta chain family. In terms of assembly, the RNAP catalytic core consists of 2 alpha, 1 beta, 1 beta' and 1 omega subunit. When a sigma factor is associated with the core the holoenzyme is formed, which can initiate transcription.

The catalysed reaction is RNA(n) + a ribonucleoside 5'-triphosphate = RNA(n+1) + diphosphate. DNA-dependent RNA polymerase catalyzes the transcription of DNA into RNA using the four ribonucleoside triphosphates as substrates. This is DNA-directed RNA polymerase subunit beta from Shewanella pealeana (strain ATCC 700345 / ANG-SQ1).